Reading from the N-terminus, the 101-residue chain is NAD(P)H-quinone oxidoreductase subunit 4L, chloroplastic (101 aa).

3 helical membrane passes run methionine 2–isoleucine 22, methionine 32–phenylalanine 52, and isoleucine 61–valine 81.

This sequence belongs to the complex I subunit 4L family. NDH is composed of at least 16 different subunits, 5 of which are encoded in the nucleus.

Its subcellular location is the plastid. The protein localises to the chloroplast thylakoid membrane. The enzyme catalyses a plastoquinone + NADH + (n+1) H(+)(in) = a plastoquinol + NAD(+) + n H(+)(out). It catalyses the reaction a plastoquinone + NADPH + (n+1) H(+)(in) = a plastoquinol + NADP(+) + n H(+)(out). NDH shuttles electrons from NAD(P)H:plastoquinone, via FMN and iron-sulfur (Fe-S) centers, to quinones in the photosynthetic chain and possibly in a chloroplast respiratory chain. The immediate electron acceptor for the enzyme in this species is believed to be plastoquinone. Couples the redox reaction to proton translocation, and thus conserves the redox energy in a proton gradient. In Nymphaea alba (White water-lily), this protein is NAD(P)H-quinone oxidoreductase subunit 4L, chloroplastic.